The following is a 548-amino-acid chain: Calcium-transporting ATPase (548 aa).

A signal peptide spans 1–21 (MNFKSTVITAMCCFFSFAVLA). A divalent metal cation-binding residues include aspartate 37 and threonine 78. The active-site Phosphothreonine intermediate is threonine 78. Substrate is bound by residues asparagine 99 and 160–162 (KDR). Residues 179 to 187 (DGKTGDWIT) carry the ATP-binding motif. A divalent metal cation-binding residues include aspartate 305, histidine 309, aspartate 352, histidine 353, and histidine 488.

It depends on Mg(2+) as a cofactor.

The protein localises to the cell inner membrane. It carries out the reaction Ca(2+)(in) + ATP + H2O = Ca(2+)(out) + ADP + phosphate + H(+). Its activity is regulated as follows. Completely inhibited by vanadate(3-). Also inhibited by lanthanoid atom and phosphate. Not inhibited by N-ethylmaleimide, 1,3-dicyclohexylcarbodiimide, oligomycin, ouabain, valinomycin, nigericin, thapsigargin, cyclopiazonic acid or fluorescein isothiocyanate. Its function is as follows. Catalyzes the hydrolysis of ATP coupled with the transport of calcium. Has some hydrolysis activity also with dATP, GTP, UTP, ITP and 4-nitrophenyl phosphate as substrate. No activity with ADP, CTP, acetyl dihydrogen phosphate or AMP-PNP as substrate. The polypeptide is Calcium-transporting ATPase (Myroides odoratus (Flavobacterium odoratum)).